The primary structure comprises 54 residues: UPF0391 membrane protein RC1_1636 (54 aa).

The next 2 helical transmembrane spans lie at 3–23 (YWALIFFVVALVAGVLGFGGI) and 30–50 (IAQILFFIFLVIFVVSLIMGL).

This sequence belongs to the UPF0391 family.

It localises to the cell membrane. This is UPF0391 membrane protein RC1_1636 from Rhodospirillum centenum (strain ATCC 51521 / SW).